We begin with the raw amino-acid sequence, 152 residues long: Ribosome maturation factor RimP (152 aa).

This sequence belongs to the RimP family.

It localises to the cytoplasm. Functionally, required for maturation of 30S ribosomal subunits. The polypeptide is Ribosome maturation factor RimP (Ruminiclostridium cellulolyticum (strain ATCC 35319 / DSM 5812 / JCM 6584 / H10) (Clostridium cellulolyticum)).